Consider the following 691-residue polypeptide: Inactive TPR repeat-containing thioredoxin TTL3 (691 aa).

Disordered regions lie at residues 1–153 and 174–209; these read MSHS…AVSP and MASR…TSGK. S8 is modified (phosphoserine). The segment covering 19–39 has biased composition (basic and acidic residues); the sequence is RFRDLQRNDDDVNKPDFRELD. Phosphoserine is present on residues S42 and S45. Residues 51 to 79 are compositionally biased toward low complexity; it reads GSASSSAAATPTSSSGSSGSASGKPSVSS. Positions 83–93 are enriched in basic and acidic residues; it reads KRLDDAYKSHS. Composition is skewed to polar residues over residues 94 to 108, 118 to 140, and 175 to 189; these read GELS…TTTR, SSTG…HTSP, and ASRT…CTGT. 8 TPR repeats span residues 220 to 253, 255 to 287, 289 to 321, 327 to 362, 412 to 445, 458 to 491, 492 to 525, and 527 to 559; these read PEEL…SPGN, AYRS…DPSY, RAHQ…PDQA, QTLE…GADS, AYVL…DQTN, VVRA…DDSN, SVLY…QPSY, and KALL…LPGD. One can recognise a Thioredoxin domain in the interval 596 to 683; sequence DKFKKSVALP…MVCPSHQFLE (88 aa).

In terms of assembly, interacts with BRL2. As to expression, expressed in embryos and organ primordia in shoot and root. In primary and cauline leaves and petals, is expressed in hydathodes, guard cells, petiole cells and cells associated with differentiating vascular bundles.

Its function is as follows. Involved in osmotic and salt stress tolerance. May play a role in the control of meristematic cell size during osmotic stress. May function as an adapter protein for BRL2 and may be required for signaling affecting leaf vascular tissue pattern formation. The sequence is that of Inactive TPR repeat-containing thioredoxin TTL3 from Arabidopsis thaliana (Mouse-ear cress).